We begin with the raw amino-acid sequence, 1545 residues long: MSGLIEKVSILRNDSIHVGYNMSSHIVDEILTKKASSTYVLITDSNIVKMGHLQTFVDEFNRLIPSKRPGSRILTYVVPPGEANKNRATKAAIEDYLLEKGCTRDTFILAIGGGVIGDMIGYVAATFMRGVRFVQIPTSLLAMVDSSIGGKTAIDTPLGKNFIGAFWQPDYVFVDVAFLETLPEREFINGMAEVVKTAAIWNEQEFSRLETYSKRFLKVIRDRRVDDSVDLTSLKEHIIKLVLESIKVKAEVVTLDEREGGLRNLLNFGHSIGHAIEAILTPQALHGECVSIGAVLEAELSRYLGILSPVAVSRLYKCFAAYGLPVSIADKLVQKRTNGKKCPVDVLLQKMAIDKKNDGSKKKVVLLSKIGKCYEPKASYVNDEDLRFVLTDEVLVKDFNSAPSTAVVVPPGSKSISNRALILAALGKGECKIKNLLHSDDTEHMLNAVAALKGADISFDDNGETVVVTGNGGNFTATDAEIYLGNAGTASRFLTSVASIVKPDSNTTHVILTGNARMQERPIGPLVDALRTNGSDIEYLNREGSLPLKIKSGNGLKGGRIELAATISSQYVSSVLMCAPYASEPVTLSLVGGKPISLLYVDMTIAMMKSFGIEVTKSTTEPYTYHVPQGHYVNPAEYVIESDASSATYPLAFAAMNGTQVTIPNIGSSSLQGDARFAVDVLKPMGCKVEQTATSTTVQGPTKGTLKPLPLVDMEPMTDAFLTASVVAAIANDTNQSTSIVGISNQRVKECNRIEAMITQLAKFGVRAKELEDGIEVFGIDYHHLKTPSDGVYTYDDHRVAMSLSLLAGLAESPVLIQERHCTGKTWPGWWDILHTTFNVELDGHEAVVETTTAKANEDKSIIVIGMRAAGKSTLSHVIAQTLKGFKVVDLDDVFVEKYGDIREFIKENSWELFREKEAMIAKEAFKNYSKNTVISTGGGIVETEASRKLLKQQMKDGHIVLHLHRDIEETVVFLSQDKTRPAYVDEINQVWERRKNLYKECSNYFFFSPHCQTEREFFTLKKTFSKFINRITGGAVPSIPNGRSAFVCLTYEDLAPVSSKLTRVTNGCDAVELRVDLLKQHDSHFISNQIGILRNQTSVPILFTIRTKSQGGRFPDDSYEDIERLLNLAIKLGVEYVDLELSLPESLLDSVASKRQFTKIIGSHHDFSGTVKWNNVEWENKYLLALKLNVDIIKFVGTATSLNDNWELEHFRSLHTDKPFIGINMGPLGKVSRVFNTILTPVTHKDLPSSAAPGQLTLKEINEYFGQFGGSSRKKFYIVGKPISHSKSPELHKTFYDEFGLSHTFDKFETDDAAKVFNDLVKGNDELGGCAVTIPLKIDMLKYVNELTDSAKSIGALNTIIPIGDGRFIGDNTDWIGIRDSLHQAGCEIAPESSVGLVVGGGGTSRAAVYALHQMGCSKIYMLNRTPSKLSEIKNHFPSNYNIHIVDSLDAIDEDDKLDAAVSTVPGDKPLDDQLISLLKKLLEKKRGHAVLLEAAYKPRETPIMALAFSRGWKVVPGSKMLVNQGIEQFYKWTGYQFSSHIDL.

Residues 1 to 383 (MSGLIEKVSI…YEPKASYVND (383 aa)) are 3-dehydroquinate synthase. Residues 44 to 46 (DSN), 82 to 85 (EANK), 113 to 115 (GGV), and Asp118 each bind NAD(+). A 7-phospho-2-dehydro-3-deoxy-D-arabino-heptonate-binding site is contributed by Arg129. 138-139 (TS) serves as a coordination point for NAD(+). Asp145 and Lys151 together coordinate 7-phospho-2-dehydro-3-deoxy-D-arabino-heptonate. An NAD(+)-binding site is contributed by Lys160. Asn161 lines the 7-phospho-2-dehydro-3-deoxy-D-arabino-heptonate pocket. Residues 178-181 (FLET) and Asn189 contribute to the NAD(+) site. Glu193 contributes to the Zn(2+) binding site. 7-phospho-2-dehydro-3-deoxy-D-arabino-heptonate is bound by residues 193–196 (EVVK) and Lys249. The active-site Proton acceptor; for 3-dehydroquinate synthase activity is the Glu259. Residues 263–267 (RNLLN) and His270 contribute to the 7-phospho-2-dehydro-3-deoxy-D-arabino-heptonate site. A Zn(2+)-binding site is contributed by His270. His274 (proton acceptor; for 3-dehydroquinate synthase activity) is an active-site residue. 7-phospho-2-dehydro-3-deoxy-D-arabino-heptonate-binding residues include His286 and Lys355. His286 is a Zn(2+) binding site. Residues 396–840 (VKDFNSAPST…WDILHTTFNV (445 aa)) are EPSP synthase. Catalysis depends on Cys822, which acts as the For EPSP synthase activity. Positions 859–1049 (DKSIIVIGMR…IPNGRSAFVC (191 aa)) are shikimate kinase. 866–873 (GMRAAGKS) contributes to the ATP binding site. A 3-dehydroquinase region spans residues 1050 to 1261 (LTYEDLAPVS…AAPGQLTLKE (212 aa)). His1166 functions as the Proton acceptor; for 3-dehydroquinate dehydratase activity in the catalytic mechanism. Lys1195 (schiff-base intermediate with substrate; for 3-dehydroquinate dehydratase activity) is an active-site residue. The interval 1274 to 1545 (RKKFYIVGKP…GYQFSSHIDL (272 aa)) is shikimate dehydrogenase.

This sequence in the N-terminal section; belongs to the sugar phosphate cyclases superfamily. Dehydroquinate synthase family. The protein in the 2nd section; belongs to the EPSP synthase family. In the 3rd section; belongs to the shikimate kinase family. It in the 4th section; belongs to the type-I 3-dehydroquinase family. This sequence in the C-terminal section; belongs to the shikimate dehydrogenase family. Homodimer. The cofactor is Zn(2+).

It localises to the cytoplasm. It catalyses the reaction 7-phospho-2-dehydro-3-deoxy-D-arabino-heptonate = 3-dehydroquinate + phosphate. It carries out the reaction 3-dehydroquinate = 3-dehydroshikimate + H2O. The enzyme catalyses shikimate + NADP(+) = 3-dehydroshikimate + NADPH + H(+). The catalysed reaction is shikimate + ATP = 3-phosphoshikimate + ADP + H(+). It catalyses the reaction 3-phosphoshikimate + phosphoenolpyruvate = 5-O-(1-carboxyvinyl)-3-phosphoshikimate + phosphate. The protein operates within metabolic intermediate biosynthesis; chorismate biosynthesis; chorismate from D-erythrose 4-phosphate and phosphoenolpyruvate: step 2/7. It participates in metabolic intermediate biosynthesis; chorismate biosynthesis; chorismate from D-erythrose 4-phosphate and phosphoenolpyruvate: step 3/7. Its pathway is metabolic intermediate biosynthesis; chorismate biosynthesis; chorismate from D-erythrose 4-phosphate and phosphoenolpyruvate: step 4/7. It functions in the pathway metabolic intermediate biosynthesis; chorismate biosynthesis; chorismate from D-erythrose 4-phosphate and phosphoenolpyruvate: step 5/7. The protein operates within metabolic intermediate biosynthesis; chorismate biosynthesis; chorismate from D-erythrose 4-phosphate and phosphoenolpyruvate: step 6/7. The AROM polypeptide catalyzes 5 consecutive enzymatic reactions in prechorismate polyaromatic amino acid biosynthesis. The polypeptide is Pentafunctional AROM polypeptide (Komagataella phaffii (strain GS115 / ATCC 20864) (Yeast)).